The primary structure comprises 326 residues: Homeobox protein Hox-A1 (326 aa).

The Antp-type hexapeptide signature appears at 196 to 201; it reads TFDWMK. The homeobox DNA-binding region spans 221–280; sequence PNTVRTNFTTKQLTELEKEFHFNKYLTRARRVEIAAALQLNETQVKIWFQNRRMKQKKRE. Residues 273–326 are disordered; that stretch reads RMKQKKREKEGLTSASPATPGSEANTEDTSDKCNSTSSTPSPSSSTSETINTSG. Residues 285–296 show a composition bias toward polar residues; sequence TSASPATPGSEA. A compositionally biased stretch (low complexity) spans 306 to 326; sequence NSTSSTPSPSSSTSETINTSG.

It belongs to the Antp homeobox family. Labial subfamily.

Its subcellular location is the nucleus. In terms of biological role, sequence-specific transcription factor. Part of a developmental regulatory system that provides cells with specific positional identities on the anterior-posterior axis. Acts on the anterior body structures. Seems to act in the maintenance and/or generation of hindbrain segments. This is Homeobox protein Hox-A1 (HOXA1) from Heterodontus francisci (Horn shark).